A 147-amino-acid chain; its full sequence is Hemoglobin subunit gamma (147 aa).

A Globin domain is found at 3–147 (HFTAEEKAAI…VANALAYKYH (145 aa)). Heme b-binding residues include His-64 and His-93.

It belongs to the globin family. As to quaternary structure, heterotetramer of two alpha chains and two gamma chains in fetal hemoglobin (Hb F). Red blood cells.

Functionally, gamma chains make up the fetal hemoglobin F, in combination with alpha chains. In Elephas maximus (Indian elephant), this protein is Hemoglobin subunit gamma (HBG).